Here is a 343-residue protein sequence, read N- to C-terminus: Holliday junction branch migration complex subunit RuvB (343 aa).

Positions 4–193 are large ATPase domain (RuvB-L); sequence TDNLTAAQPQ…FGIVSRLEFY (190 aa). ATP is bound by residues Leu-32, Arg-33, Gly-74, Lys-77, Thr-78, Thr-79, 140-142, Arg-183, Tyr-193, and Arg-230; that span reads EDY. Position 78 (Thr-78) interacts with Mg(2+). Residues 194–264 form a small ATPAse domain (RuvB-S) region; the sequence is ENRDLTTIVS…VADAALSMLD (71 aa). The segment at 267–343 is head domain (RuvB-H); it reads AQGLDVMDRK…YLHFGLPVEK (77 aa). The DNA site is built by Arg-322 and Arg-327.

It belongs to the RuvB family. In terms of assembly, homohexamer. Forms an RuvA(8)-RuvB(12)-Holliday junction (HJ) complex. HJ DNA is sandwiched between 2 RuvA tetramers; dsDNA enters through RuvA and exits via RuvB. An RuvB hexamer assembles on each DNA strand where it exits the tetramer. Each RuvB hexamer is contacted by two RuvA subunits (via domain III) on 2 adjacent RuvB subunits; this complex drives branch migration. In the full resolvosome a probable DNA-RuvA(4)-RuvB(12)-RuvC(2) complex forms which resolves the HJ.

Its subcellular location is the cytoplasm. The catalysed reaction is ATP + H2O = ADP + phosphate + H(+). In terms of biological role, the RuvA-RuvB-RuvC complex processes Holliday junction (HJ) DNA during genetic recombination and DNA repair, while the RuvA-RuvB complex plays an important role in the rescue of blocked DNA replication forks via replication fork reversal (RFR). RuvA specifically binds to HJ cruciform DNA, conferring on it an open structure. The RuvB hexamer acts as an ATP-dependent pump, pulling dsDNA into and through the RuvAB complex. RuvB forms 2 homohexamers on either side of HJ DNA bound by 1 or 2 RuvA tetramers; 4 subunits per hexamer contact DNA at a time. Coordinated motions by a converter formed by DNA-disengaged RuvB subunits stimulates ATP hydrolysis and nucleotide exchange. Immobilization of the converter enables RuvB to convert the ATP-contained energy into a lever motion, pulling 2 nucleotides of DNA out of the RuvA tetramer per ATP hydrolyzed, thus driving DNA branch migration. The RuvB motors rotate together with the DNA substrate, which together with the progressing nucleotide cycle form the mechanistic basis for DNA recombination by continuous HJ branch migration. Branch migration allows RuvC to scan DNA until it finds its consensus sequence, where it cleaves and resolves cruciform DNA. The polypeptide is Holliday junction branch migration complex subunit RuvB (Neisseria gonorrhoeae (strain NCCP11945)).